A 449-amino-acid chain; its full sequence is Phosphoglucosamine mutase (449 aa).

The Phosphoserine intermediate role is filled by Ser-102. 4 residues coordinate Mg(2+): Ser-102, Asp-241, Asp-243, and Asp-245. Ser-102 carries the phosphoserine modification.

This sequence belongs to the phosphohexose mutase family. Mg(2+) serves as cofactor. Activated by phosphorylation.

The catalysed reaction is alpha-D-glucosamine 1-phosphate = D-glucosamine 6-phosphate. Its function is as follows. Catalyzes the conversion of glucosamine-6-phosphate to glucosamine-1-phosphate. This Pseudoalteromonas translucida (strain TAC 125) protein is Phosphoglucosamine mutase.